Here is a 1612-residue protein sequence, read N- to C-terminus: DNA (cytosine-5)-methyltransferase PliMCI (1612 aa).

The 95-residue stretch at 7-101 (CDQVIPPNVR…NGDTKEEASS (95 aa)) folds into the DMAP1-binding domain. The tract at residues 87 to 338 (TCSPVNGDTK…TAESKQPPLR (252 aa)) is disordered. Residues 94-110 (DTKEEASSNGKDDEKAE) are compositionally biased toward basic and acidic residues. The span at 115 to 131 (NGTTSNGSTTNGSSGSS) shows a compositional bias: low complexity. The segment covering 132 to 142 (KANGHTNGGYV) has biased composition (polar residues). Residues 143–154 (QSSSQEETGTSQ) are compositionally biased toward low complexity. 3 stretches are compositionally biased toward basic and acidic residues: residues 193-212 (VLGD…KKDV), 222-232 (EESATPDEKTL), and 260-289 (KKEE…KKEE). Residues 626 to 672 (ASERKKRCGVCEICQAPDCGKCTACKDMIKFGGSGKAKQACKDRRCP) form a CXXC-type zinc finger. Zn(2+) contacts are provided by Cys-633, Cys-636, Cys-639, Cys-644, Cys-647, Cys-650, Cys-666, and Cys-671. Residues 677–708 (QEADENDIDEMDNSSNKENKDEKKAKKGRKLE) are disordered. The segment covering 678 to 688 (EADENDIDEMD) has biased composition (acidic residues). The segment covering 691 to 708 (SNKENKDEKKAKKGRKLE) has biased composition (basic and acidic residues). 2 BAH domains span residues 743 to 871 (EKIE…EDYE) and 967 to 1089 (NYRK…EDPP). Residues 1084 to 1121 (CFEDPPSKSRSTRMKGKGKGKGKGKAKGKIAVEKEEEK) form a disordered region. The span at 1093–1111 (RSTRMKGKGKGKGKGKAKG) shows a compositional bias: basic residues. The SAM-dependent MTase C5-type domain maps to 1131–1590 (LKCLDVFAGC…MEIKVCLQTK (460 aa)). Residues 1142–1143 (GL), 1160–1161 (EK), 1182–1183 (DC), and Cys-1183 each bind S-adenosyl-L-methionine. Residue Cys-1218 is part of the active site. Positions 1569 and 1571 each coordinate S-adenosyl-L-methionine.

Belongs to the class I-like SAM-binding methyltransferase superfamily. C5-methyltransferase family.

It localises to the nucleus. The catalysed reaction is a 2'-deoxycytidine in DNA + S-adenosyl-L-methionine = a 5-methyl-2'-deoxycytidine in DNA + S-adenosyl-L-homocysteine + H(+). In terms of biological role, methylates CpG residues. The chain is DNA (cytosine-5)-methyltransferase PliMCI (DNMT) from Paracentrotus lividus (Common sea urchin).